A 389-amino-acid polypeptide reads, in one-letter code: Teichoic acid ribitol-phosphate primase (389 aa).

It belongs to the CDP-glycerol glycerophosphotransferase family.

The protein resides in the cell membrane. The catalysed reaction is 4-O-[(2R)-glycerylphospho]-N-acetyl-beta-D-mannosaminyl-(1-&gt;4)-N-acetyl-alpha-D-glucosaminyl di-trans,octa-cis-undecaprenyl diphosphate + CDP-L-ribitol = 4-O-[1-D-ribitylphospho-(2R)-1-glycerylphospho]-N-acetyl-beta-D-mannosaminyl-(1-&gt;4)-N-acetyl-alpha-D-glucosaminyl di-trans,octa-cis-undecaprenyl diphosphate + CMP + H(+). It participates in cell wall biogenesis; poly(ribitol phosphate) teichoic acid biosynthesis. Its function is as follows. Catalyzes the addition of a single ribitol phosphate unit onto the glycerol phosphate of the linkage unit, as a primer for polymerisation by TarL. The protein is Teichoic acid ribitol-phosphate primase (tarK) of Bacillus spizizenii (strain ATCC 23059 / NRRL B-14472 / W23) (Bacillus subtilis subsp. spizizenii).